The sequence spans 127 residues: UPF0102 protein Cpha266_0037 (127 aa).

This sequence belongs to the UPF0102 family.

The polypeptide is UPF0102 protein Cpha266_0037 (Chlorobium phaeobacteroides (strain DSM 266 / SMG 266 / 2430)).